The chain runs to 416 residues: MHGKLLPLAGLYLVQGLPYGLQSSLLPILLRARGLSLTRVGLTKGLYAPWLLKLAWAPLVDRRGTPRVWLTFSTVCLGLVCGLLAVLPPPQAGQTGLPTTVMGLLLLLNLGAAVQDVALDTLAVQLLEPKELGPGNTVQVVAYKLGSALAGGGLLVFFPTLSWPLLFLLLTATYWLAAALAWAAPALGRLSRPQVSEHTPHTSYLLQDLLAVPGTLWTAGFVLTYKMGEQGAGSLFPLLLLDHGASASDLGLWSGLGAATCSIAGSSLGGALLARHCSHPRQPLKLLRSVLQLRLGGLACQTALLLHLNTPGASLDPGTVMRGAALLSLCLQQFLGGVVTTATFTVMMHCSQLAPRALQATHYSFLATLELLGKLLPGTLAGVLADGLGPRLCFAAFLVLSALPVLDLRLAPSNLT.

A run of 12 helical transmembrane segments spans residues 10–30 (GLYL…PILL), 40–60 (VGLT…APLV), 68–88 (VWLT…AVLP), 99–119 (TTVM…DVAL), 139–158 (QVVA…LVFF), 170–190 (LTAT…LGRL), 204–224 (YLLQ…FVLT), 252–272 (LWSG…GGAL), 295–315 (LGGL…GASL), 324–344 (AALL…TATF), 365–385 (FLAT…GVLA), and 392–412 (LCFA…RLAP).

The protein belongs to the major facilitator superfamily.

The protein localises to the membrane. In Rattus norvegicus (Rat), this protein is Major facilitator superfamily domain-containing protein 3 (Mfsd3).